A 191-amino-acid chain; its full sequence is dCTP deaminase (191 aa).

Residues 112-117 (KSTYAR), 136-138 (TLE), Q157, Y173, and Q183 contribute to the dCTP site. The active-site Proton donor/acceptor is E138.

The protein belongs to the dCTP deaminase family. Homotrimer.

The catalysed reaction is dCTP + H2O + H(+) = dUTP + NH4(+). It participates in pyrimidine metabolism; dUMP biosynthesis; dUMP from dCTP (dUTP route): step 1/2. Functionally, catalyzes the deamination of dCTP to dUTP. The protein is dCTP deaminase of Psychrobacter cryohalolentis (strain ATCC BAA-1226 / DSM 17306 / VKM B-2378 / K5).